A 602-amino-acid chain; its full sequence is Histone-arginine methyltransferase CARM1 (602 aa).

Residues 117-424 form the SAM-dependent MTase PRMT-type domain; the sequence is AVQYFQFYGY…KKQSYDISIV (308 aa). The S-adenosyl-L-methionine site is built by Q130, R139, G163, E185, E214, and S242. The segment at 470 to 602 is transactivation domain; the sequence is TGGAYTMNTG…ITTNTMHYGS (133 aa).

This sequence belongs to the class I-like SAM-binding methyltransferase superfamily. Protein arginine N-methyltransferase family. In terms of assembly, homodimer.

The protein resides in the nucleus. The protein localises to the cytoplasm. It is found in the chromosome. The enzyme catalyses L-arginyl-[protein] + 2 S-adenosyl-L-methionine = N(omega),N(omega)-dimethyl-L-arginyl-[protein] + 2 S-adenosyl-L-homocysteine + 2 H(+). Functionally, methylates (mono- and asymmetric dimethylation) the guanidino nitrogens of arginyl residues in several proteins involved in DNA packaging, transcription regulation, pre-mRNA splicing, and mRNA stability. Recruited to promoters upon gene activation together with histone acetyltransferases from EP300/P300 and p160 families, methylates histone H3 at 'Arg-17' (H3R17me) and activates transcription via chromatin remodeling. This is Histone-arginine methyltransferase CARM1 (carm1) from Xenopus laevis (African clawed frog).